A 98-amino-acid polypeptide reads, in one-letter code: NADH-ubiquinone oxidoreductase chain 4L (98 aa).

3 consecutive transmembrane segments (helical) span residues 1–21 (MPSTYINILLAFTMALLGLLL), 29–49 (SLLCLEGLMLALFILSTLMAL), and 61–81 (IVLMVFAACEAALGLALLVMV).

This sequence belongs to the complex I subunit 4L family. In terms of assembly, core subunit of respiratory chain NADH dehydrogenase (Complex I) which is composed of 45 different subunits.

The protein localises to the mitochondrion inner membrane. It carries out the reaction a ubiquinone + NADH + 5 H(+)(in) = a ubiquinol + NAD(+) + 4 H(+)(out). In terms of biological role, core subunit of the mitochondrial membrane respiratory chain NADH dehydrogenase (Complex I) which catalyzes electron transfer from NADH through the respiratory chain, using ubiquinone as an electron acceptor. Part of the enzyme membrane arm which is embedded in the lipid bilayer and involved in proton translocation. The sequence is that of NADH-ubiquinone oxidoreductase chain 4L (MT-ND4L) from Choloepus didactylus (Southern two-toed sloth).